Here is an 84-residue protein sequence, read N- to C-terminus: Beta-cardiotoxin CTX23 (84 aa).

A signal peptide spans methionine 1–threonine 21. Intrachain disulfides connect cysteine 24-cysteine 43, cysteine 36-cysteine 61, cysteine 65-cysteine 76, and cysteine 77-cysteine 82.

This sequence belongs to the three-finger toxin family. Short-chain subfamily. Aminergic toxin sub-subfamily. Expressed by the venom gland.

Its subcellular location is the secreted. Its function is as follows. Acts as a beta-blocker by binding to beta-1 and beta-2 adrenergic receptors (ADRB1 and ADRB2). It dose-dependently decreases the heart rate (bradycardia), whereas conventional cardiotoxins increases it. At 100 mg/kg, intraperitoneal injection into mice provokes labored breathing, impaired locomotion, lack of response to external stimuli, and death (after 30 minutes). The protein is Beta-cardiotoxin CTX23 of Ophiophagus hannah (King cobra).